Consider the following 206-residue polypeptide: RNA pyrophosphohydrolase (206 aa).

Positions 6 to 150 constitute a Nudix hydrolase domain; that stretch reads GYRPNVGIVI…KRDVYRKVMK (145 aa). Positions 38–59 match the Nudix box motif; sequence GGINEGENIETAMYRELYEEVG. Residues 162–191 are compositionally biased toward basic and acidic residues; that stretch reads KPETVEKPRVERTEKRDFQKRDNQKREFRK. The segment at 162-206 is disordered; that stretch reads KPETVEKPRVERTEKRDFQKRDNQKREFRKSARMWNNSHQKGKAQ.

The protein belongs to the Nudix hydrolase family. RppH subfamily. The cofactor is a divalent metal cation.

Accelerates the degradation of transcripts by removing pyrophosphate from the 5'-end of triphosphorylated RNA, leading to a more labile monophosphorylated state that can stimulate subsequent ribonuclease cleavage. In Actinobacillus pleuropneumoniae serotype 7 (strain AP76), this protein is RNA pyrophosphohydrolase.